The following is a 361-amino-acid chain: Phospho-N-acetylmuramoyl-pentapeptide-transferase (361 aa).

The next 10 helical transmembrane spans lie at 28-48, 73-93, 98-118, 132-152, 168-188, 199-219, 235-255, 263-283, 288-308, and 338-358; these read LAIL…IRWL, TMGG…WGNL, MWIM…DDYL, YKLF…YFNP, WLID…VGSS, GLAA…LYIS, GTGE…GFLW, VFMG…LAVI, IVLA…ILQV, and KVIV…LLTL.

This sequence belongs to the glycosyltransferase 4 family. MraY subfamily. Mg(2+) serves as cofactor.

The protein localises to the cell inner membrane. The enzyme catalyses UDP-N-acetyl-alpha-D-muramoyl-L-alanyl-gamma-D-glutamyl-meso-2,6-diaminopimeloyl-D-alanyl-D-alanine + di-trans,octa-cis-undecaprenyl phosphate = di-trans,octa-cis-undecaprenyl diphospho-N-acetyl-alpha-D-muramoyl-L-alanyl-D-glutamyl-meso-2,6-diaminopimeloyl-D-alanyl-D-alanine + UMP. Its pathway is cell wall biogenesis; peptidoglycan biosynthesis. In terms of biological role, catalyzes the initial step of the lipid cycle reactions in the biosynthesis of the cell wall peptidoglycan: transfers peptidoglycan precursor phospho-MurNAc-pentapeptide from UDP-MurNAc-pentapeptide onto the lipid carrier undecaprenyl phosphate, yielding undecaprenyl-pyrophosphoryl-MurNAc-pentapeptide, known as lipid I. The chain is Phospho-N-acetylmuramoyl-pentapeptide-transferase from Thermodesulfovibrio yellowstonii (strain ATCC 51303 / DSM 11347 / YP87).